The sequence spans 704 residues: Elongation factor G (704 aa).

A tr-type G domain is found at 8–291 (VRYRNIGISA…AVVEYLPSPS (284 aa)). GTP is bound by residues 17–24 (AHIDAGKT), 88–92 (DTPGH), and 142–145 (NKMD).

The protein belongs to the TRAFAC class translation factor GTPase superfamily. Classic translation factor GTPase family. EF-G/EF-2 subfamily.

Its subcellular location is the cytoplasm. Catalyzes the GTP-dependent ribosomal translocation step during translation elongation. During this step, the ribosome changes from the pre-translocational (PRE) to the post-translocational (POST) state as the newly formed A-site-bound peptidyl-tRNA and P-site-bound deacylated tRNA move to the P and E sites, respectively. Catalyzes the coordinated movement of the two tRNA molecules, the mRNA and conformational changes in the ribosome. In Blochmanniella pennsylvanica (strain BPEN), this protein is Elongation factor G.